A 27-amino-acid polypeptide reads, in one-letter code: Nemertide alpha-8 (27 aa).

3 disulfides stabilise this stretch: Cys2/Cys16, Cys9/Cys20, and Cys15/Cys26.

It belongs to the nemertide family. As to expression, confined to the epidermis and to the mucus layer.

The protein resides in the secreted. Its function is as follows. Highly potent toxin against both insect and some mammalian sodium channels (Nav). It potently inhibits inactivation of insect sodium channels of B.germanica (BgNav1) and also delays the inactivation of mammalian Nav with potent activity on Nav1.3/SCN3A and Nav1.4/SCN4A. 1 uM is enough to completely inhibits the inactivation, resulting in sustained non-inactivating currents. In addition, the toxin significantly enhances the recovery from inactivation, and the open state is not required for the toxin to interact with the channel. In vivo, injection into brine shrimp (Artemia salina) stops movement or causes death after 24 hours (EC(50)=0.4 uM). The chain is Nemertide alpha-8 from Riseriellus occultus (Ribbon worm).